The chain runs to 382 residues: p21-activated protein kinase-interacting protein 1 (382 aa).

5 WD repeats span residues 37-77 (THHS…EHGA), 80-120 (HHAG…KTFK), 122-160 (HRGH…SAFI), 202-240 (TNGK…CLCE), and 243-284 (AHEN…KVPP). The disordered stretch occupies residues 313–382 (LPPAAEPCPD…MSEKKRKKKM (70 aa)). A compositionally biased stretch (polar residues) spans 352–363 (DSKQPTKGNSPV). Over residues 365–382 (AKKRKMATMSEKKRKKKM) the composition is skewed to basic residues.

In terms of assembly, interacts with PAK1.

Its subcellular location is the nucleus. It is found in the nucleolus. Negatively regulates the PAK1 kinase. PAK1 is a member of the PAK kinase family, which has been shown to play a positive role in the regulation of signaling pathways involving MAPK8 and RELA. PAK1 exists as an inactive homodimer, which is activated by binding of small GTPases such as CDC42 to an N-terminal regulatory domain. PAK1IP1 also binds to the N-terminus of PAK1, and inhibits the specific activation of PAK1 by CDC42. May be involved in ribosomal large subunit assembly. The chain is p21-activated protein kinase-interacting protein 1 (Pak1ip1) from Mus musculus (Mouse).